The primary structure comprises 436 residues: Tol-Pal system protein TolB (436 aa).

Residues 1-19 (MVKCSLIRALMVVAGLVGA) form the signal peptide.

This sequence belongs to the TolB family. As to quaternary structure, the Tol-Pal system is composed of five core proteins: the inner membrane proteins TolA, TolQ and TolR, the periplasmic protein TolB and the outer membrane protein Pal. They form a network linking the inner and outer membranes and the peptidoglycan layer.

The protein localises to the periplasm. Its function is as follows. Part of the Tol-Pal system, which plays a role in outer membrane invagination during cell division and is important for maintaining outer membrane integrity. This is Tol-Pal system protein TolB from Rhizobium etli (strain ATCC 51251 / DSM 11541 / JCM 21823 / NBRC 15573 / CFN 42).